The chain runs to 420 residues: ATP phosphoribosyltransferase regulatory subunit (420 aa).

This sequence belongs to the class-II aminoacyl-tRNA synthetase family. HisZ subfamily. Heteromultimer composed of HisG and HisZ subunits.

Its subcellular location is the cytoplasm. Its pathway is amino-acid biosynthesis; L-histidine biosynthesis; L-histidine from 5-phospho-alpha-D-ribose 1-diphosphate: step 1/9. In terms of biological role, required for the first step of histidine biosynthesis. May allow the feedback regulation of ATP phosphoribosyltransferase activity by histidine. The sequence is that of ATP phosphoribosyltransferase regulatory subunit from Bacillus cereus (strain ATCC 10987 / NRS 248).